A 360-amino-acid polypeptide reads, in one-letter code: Terpene synthase 5 (360 aa).

Positions 87 to 92 (DDFLER) match the DDxx(x)D/E motif motif. Residues 237 to 245 (NDCVSYAKE) carry the NDxxSxxxD/E motif motif.

Belongs to the terpene synthase family.

Functionally, terpene synthase that converts its substrate farnesyl diphosphate (FPP) into 2 yet unidentified sesquiterpenes. The chain is Terpene synthase 5 from Dictyostelium purpureum (Slime mold).